A 460-amino-acid polypeptide reads, in one-letter code: Glycine--tRNA ligase (460 aa).

Substrate is bound by residues Arg98 and Glu172. ATP is bound by residues 204 to 206 (RNE), 214 to 219 (FRTREF), 288 to 289 (EL), and 332 to 335 (GADR). Residue 219-223 (FEQME) coordinates substrate. Position 328–332 (328–332 (EPSLG)) interacts with substrate.

The protein belongs to the class-II aminoacyl-tRNA synthetase family. In terms of assembly, homodimer.

The protein resides in the cytoplasm. The catalysed reaction is tRNA(Gly) + glycine + ATP = glycyl-tRNA(Gly) + AMP + diphosphate. Functionally, catalyzes the attachment of glycine to tRNA(Gly). The chain is Glycine--tRNA ligase from Geobacillus kaustophilus (strain HTA426).